A 476-amino-acid chain; its full sequence is Cys-Gly metallodipeptidase dug1 (476 aa).

His99 contributes to the Zn(2+) binding site. Residue Asp101 is part of the active site. Residue Asp133 participates in Zn(2+) binding. Residue Glu167 is the Proton acceptor of the active site. 3 residues coordinate Zn(2+): Glu168, Asp196, and His446.

The protein belongs to the peptidase M20A family. Homodimer. Component of the GSH degradosomal complex. Zn(2+) is required as a cofactor. Requires Mn(2+) as cofactor.

The protein resides in the cytoplasm. Its function is as follows. Catalytic component of the GSH degradosomal complex involved in the degradation of glutathione (GSH) and other peptides containing a gamma-glu-X bond. Has a Gly-Cys dipeptidase activity. The polypeptide is Cys-Gly metallodipeptidase dug1 (dug1) (Schizosaccharomyces pombe (strain 972 / ATCC 24843) (Fission yeast)).